The chain runs to 154 residues: General odorant-binding protein 83a (154 aa).

The N-terminal stretch at 1–33 is a signal peptide; it reads MALNGFGRRVSASVLLIALSLLSGALILPPAAA. Cystine bridges form between Cys-55–Cys-86, Cys-82–Cys-133, and Cys-124–Cys-142.

The protein belongs to the PBP/GOBP family. In the ventrolateral region of the antenna, expressed in two distinct types of olfactory hairs: in most sensilla trichodea and in a subset of the small sensilla basiconica (at protein level).

It is found in the secreted. The chain is General odorant-binding protein 83a (Obp83a) from Drosophila melanogaster (Fruit fly).